Reading from the N-terminus, the 33-residue chain is Protamine-1B (33 aa).

The segment at 1–33 is disordered; that stretch reads PRRRRRRSSSRPIRRRRPRRVSRRRRRGGRRRR.

In terms of tissue distribution, testis.

Its subcellular location is the nucleus. It localises to the chromosome. Functionally, protamines substitute for histones in the chromatin of sperm during the haploid phase of spermatogenesis. They compact sperm DNA into a highly condensed, stable and inactive complex. This Oncorhynchus mykiss (Rainbow trout) protein is Protamine-1B.